A 120-amino-acid polypeptide reads, in one-letter code: UPF0231 protein YacL (120 aa).

This sequence belongs to the UPF0231 family.

In Escherichia coli O6:K15:H31 (strain 536 / UPEC), this protein is UPF0231 protein YacL.